Here is a 600-residue protein sequence, read N- to C-terminus: NADH-quinone oxidoreductase subunit C/D (600 aa).

The tract at residues 1–190 (MVNNMTDLTA…DPFELTKAKQ (190 aa)) is NADH dehydrogenase I subunit C. Residues 214–600 (DFMFLNLGPN…IDFVMSDVDR (387 aa)) are NADH dehydrogenase I subunit D.

The protein in the N-terminal section; belongs to the complex I 30 kDa subunit family. This sequence in the C-terminal section; belongs to the complex I 49 kDa subunit family. NDH-1 is composed of 13 different subunits. Subunits NuoB, CD, E, F, and G constitute the peripheral sector of the complex.

The protein localises to the cell inner membrane. It catalyses the reaction a quinone + NADH + 5 H(+)(in) = a quinol + NAD(+) + 4 H(+)(out). Functionally, NDH-1 shuttles electrons from NADH, via FMN and iron-sulfur (Fe-S) centers, to quinones in the respiratory chain. The immediate electron acceptor for the enzyme in this species is believed to be ubiquinone. Couples the redox reaction to proton translocation (for every two electrons transferred, four hydrogen ions are translocated across the cytoplasmic membrane), and thus conserves the redox energy in a proton gradient. This chain is NADH-quinone oxidoreductase subunit C/D, found in Salmonella arizonae (strain ATCC BAA-731 / CDC346-86 / RSK2980).